The sequence spans 251 residues: Flap endonuclease Xni (251 aa).

Position 104 (aspartate 104) interacts with Mg(2+). The 5'-3' exonuclease domain occupies 160–249 (VSPGQLADFW…LDGNLQQLRL (90 aa)). Residues leucine 171, alanine 172, proline 180, valine 182, and isoleucine 185 each coordinate K(+). The tract at residues 184 to 189 (GIGPKS) is interaction with DNA.

Belongs to the Xni family. Requires Mg(2+) as cofactor. K(+) serves as cofactor.

Functionally, has flap endonuclease activity. During DNA replication, flap endonucleases cleave the 5'-overhanging flap structure that is generated by displacement synthesis when DNA polymerase encounters the 5'-end of a downstream Okazaki fragment. In Cronobacter sakazakii (strain ATCC BAA-894) (Enterobacter sakazakii), this protein is Flap endonuclease Xni.